A 266-amino-acid polypeptide reads, in one-letter code: HLA class II histocompatibility antigen, DR beta 4 chain (266 aa).

The N-terminal stretch at 1-29 (MVCLKLPGGSCMAALTVTLTVLSSPLALA) is a signal peptide. The beta-1 stretch occupies residues 30-124 (GDTQPRFLEQ…VESFTVQRRV (95 aa)). Residues 30-227 (GDTQPRFLEQ…SARSESAQSK (198 aa)) are Extracellular-facing. 2 disulfide bridges follow: Cys44-Cys108 and Cys146-Cys202. Asn48 is a glycosylation site (N-linked (GlcNAc...) asparagine). Residues 125–227 (QPKVTVYPSK…SARSESAQSK (103 aa)) are beta-2. In terms of domain architecture, Ig-like C1-type spans 126–216 (PKVTVYPSKT…PSMMSPLTVQ (91 aa)). Residues 228–250 (MLSGVGGFVLGLLFLGTGLFIYF) traverse the membrane as a helical segment. Topologically, residues 251–266 (RNQKGHSGLQPTGLLS) are cytoplasmic. Lys254 is covalently cross-linked (Glycyl lysine isopeptide (Lys-Gly) (interchain with G-Cter in ubiquitin)).

It belongs to the MHC class II family. As to quaternary structure, heterodimer of an alpha and a beta subunit; also referred as MHC class II molecule. In the endoplasmic reticulum (ER) it forms a heterononamer; 3 MHC class II molecules bind to a CD74 homotrimer (also known as invariant chain or HLA class II histocompatibility antigen gamma chain). In the endosomal/lysosomal system; CD74 undergoes sequential degradation by various proteases; leaving a small fragment termed CLIP on each MHC class II molecule. MHC class II molecule interacts with HLA_DM, and HLA_DO in B-cells, in order to release CLIP and facilitate the binding of antigenic peptides. In terms of processing, ubiquitinated by MARCH1 and MARCH8 at Lys-254 leading to sorting into the endosome system and down-regulation of MHC class II. When associated with ubiquitination of the alpha subunit of HLA-DR: HLA-DRA 'Lys-244', the down-regulation of MHC class II may be highly effective.

It localises to the cell membrane. Its subcellular location is the endoplasmic reticulum membrane. The protein resides in the golgi apparatus. It is found in the trans-Golgi network membrane. The protein localises to the endosome membrane. It localises to the lysosome membrane. Its subcellular location is the late endosome membrane. Functionally, binds peptides derived from antigens that access the endocytic route of antigen presenting cells (APC) and presents them on the cell surface for recognition by the CD4 T-cells. The peptide binding cleft accommodates peptides of 10-30 residues. The peptides presented by MHC class II molecules are generated mostly by degradation of proteins that access the endocytic route, where they are processed by lysosomal proteases and other hydrolases. Exogenous antigens that have been endocytosed by the APC are thus readily available for presentation via MHC II molecules, and for this reason this antigen presentation pathway is usually referred to as exogenous. As membrane proteins on their way to degradation in lysosomes as part of their normal turn-over are also contained in the endosomal/lysosomal compartments, exogenous antigens must compete with those derived from endogenous components. Autophagy is also a source of endogenous peptides, autophagosomes constitutively fuse with MHC class II loading compartments. In addition to APCs, other cells of the gastrointestinal tract, such as epithelial cells, express MHC class II molecules and CD74 and act as APCs, which is an unusual trait of the GI tract. To produce a MHC class II molecule that presents an antigen, three MHC class II molecules (heterodimers of an alpha and a beta chain) associate with a CD74 trimer in the ER to form a heterononamer. Soon after the entry of this complex into the endosomal/lysosomal system where antigen processing occurs, CD74 undergoes a sequential degradation by various proteases, including CTSS and CTSL, leaving a small fragment termed CLIP (class-II-associated invariant chain peptide). The removal of CLIP is facilitated by HLA-DM via direct binding to the alpha-beta-CLIP complex so that CLIP is released. HLA-DM stabilizes MHC class II molecules until primary high affinity antigenic peptides are bound. The MHC II molecule bound to a peptide is then transported to the cell membrane surface. In B-cells, the interaction between HLA-DM and MHC class II molecules is regulated by HLA-DO. Primary dendritic cells (DCs) also to express HLA-DO. Lysosomal microenvironment has been implicated in the regulation of antigen loading into MHC II molecules, increased acidification produces increased proteolysis and efficient peptide loading. The sequence is that of HLA class II histocompatibility antigen, DR beta 4 chain (HLA-DRB4) from Homo sapiens (Human).